Consider the following 555-residue polypeptide: Formate--tetrahydrofolate ligase (555 aa).

65–72 (TPAGEGKS) contacts ATP.

This sequence belongs to the formate--tetrahydrofolate ligase family.

It carries out the reaction (6S)-5,6,7,8-tetrahydrofolate + formate + ATP = (6R)-10-formyltetrahydrofolate + ADP + phosphate. It functions in the pathway one-carbon metabolism; tetrahydrofolate interconversion. The chain is Formate--tetrahydrofolate ligase from Staphylococcus epidermidis (strain ATCC 35984 / DSM 28319 / BCRC 17069 / CCUG 31568 / BM 3577 / RP62A).